A 422-amino-acid chain; its full sequence is MEAMAASTSLPDPGDFDRNVPRICGVCGDRATGFHFNAMTCEGCKGFFRRSMKRKALFTCPFNGDCRITKDNRRHCQACRLKRCVDIGMMKEFILTDEEVQRKREMIMKRKEEEALKDSLRPKLSEEQQHIIAILLDAHHKTYDPTYADFRDFRPPIRADVSTGSYSPRPTLSFSGDSSSNSDLYTPSLDMMEPASFSTMDLNEEGSDDPSVTLDLSPLSMLPHLADLVSYSIQKVIGFAKMIPGFRDLTSDDQIVLLKSSAIEVIMLRSNQSFTLDDMSWDCGSQDYKYDITDVSRAGHTLELIEPLIKFQVGLKKLNLHEEEHVLLMAICIVSPDRPGVQDAKLVEAIQDRLSNTLQTYIRCRHPPPGSHQLYAKMIQKLADLRSLNEEHSKQYRSLSFQPENSMKLTPLVLEVFGNEIS.

The nuclear receptor DNA-binding region spans 21–96 (PRICGVCGDR…IGMMKEFILT (76 aa)). The Zn(2+) site is built by cysteine 24, cysteine 27, cysteine 41, cysteine 44, cysteine 60, cysteine 66, cysteine 76, and cysteine 79. 2 NR C4-type zinc fingers span residues 24–44 (CGVC…CEGC) and 60–84 (CPFN…LKRC). The segment at 97–126 (DEEVQRKREMIMKRKEEEALKDSLRPKLSE) is hinge. In terms of domain architecture, NR LBD spans 127–418 (EQQHIIAILL…LTPLVLEVFG (292 aa)). Tyrosine 143 lines the calcitriol pocket. The tract at residues 161-185 (VSTGSYSPRPTLSFSGDSSSNSDLY) is disordered. Residues 162-172 (STGSYSPRPTL) show a composition bias toward polar residues. Positions 173–182 (SFSGDSSSNS) are enriched in low complexity. Serine 232 contacts calcitriol. Residues 241–259 (KMIPGFRDLTSDDQIVLLK) are interaction with coactivator LXXLL motif. Positions 269, 273, 300, and 392 each coordinate calcitriol. Positions 411 to 419 (PLVLEVFGN) match the 9aaTAD motif.

The protein belongs to the nuclear hormone receptor family. NR1 subfamily. In terms of assembly, homodimer in the absence of bound vitamin D3. Heterodimer with RXRA after vitamin D3 binding. Interacts with MED1, NCOA1, NCOA2, NCOA3 and NCOA6 coactivators, leading to a strong increase of transcription of target genes. Interacts with the corepressor NCOR1. Interacts with SNW1. Interacts with IRX4, the interaction does not affect its transactivation activity. Interacts with CRY1. Interacts with CRY2 in a ligand-dependent manner. Post-translationally, ubiquitinated by UBR5, leading to its degradation: UBR5 specifically recognizes and binds ligand-bound VDR when it is not associated with coactivators (NCOAs). In presence of NCOAs, the UBR5-degron is not accessible, preventing its ubiquitination and degradation.

The protein resides in the nucleus. It is found in the cytoplasm. In terms of biological role, nuclear receptor for calcitriol, the active form of vitamin D3 which mediates the action of this vitamin on cells. Enters the nucleus upon vitamin D3 binding where it forms heterodimers with the retinoid X receptor/RXR. The VDR-RXR heterodimers bind to specific response elements on DNA and activate the transcription of vitamin D3-responsive target genes. Plays a central role in calcium homeostasis. Also functions as a receptor for the secondary bile acid lithocholic acid (LCA) and its metabolites. The sequence is that of Vitamin D3 receptor (Vdr) from Mus musculus (Mouse).